Here is a 436-residue protein sequence, read N- to C-terminus: Gustatory receptor for sugar taste 61a (436 aa).

Residues 1 to 78 (MSRTSDDIRK…PQDVKFKVRS (78 aa)) lie on the Cytoplasmic side of the membrane. A helical transmembrane segment spans residues 79–99 (IGLAVTGLFLLLGGMKTLVGA). Residues 100-111 (NILFTEGLNAKN) are Extracellular-facing. A helical transmembrane segment spans residues 112–132 (IVGLVFLIVGMVNWLNFVGFA). The Cytoplasmic portion of the chain corresponds to 133–164 (RSWSHIMLPWSSVDILMLFPPYKRGKRSLRSK). A helical membrane pass occupies residues 165–185 (VNVLALSVVVLAVGDHMLYYA). Residues 186-214 (SGYCSYSMHILQCHTNHSRITFGLYLEKE) are Extracellular-facing. A glycan (N-linked (GlcNAc...) asparagine) is linked at Asn-201. A helical membrane pass occupies residues 215-235 (FSDIMFIMPFNIFSMCYGFWL). Over 236 to 237 (NG) the chain is Cytoplasmic. Residues 238-258 (AFTFLWNFMDIFIVMTSIGLA) form a helical membrane-spanning segment. The Extracellular portion of the chain corresponds to 259–304 (QRFQQFAARVGALEGRHVPEALWYDIRRDHIRLCELASLVEASMSN). A helical membrane pass occupies residues 305–325 (IVFVSCANNVYVICNQALAIF). Residues 326 to 334 (TKLRHPINY) are Cytoplasmic-facing. Residues 335–355 (VYFWYSLIFLLARTSLVFMTA) form a helical membrane-spanning segment. Residues 356–436 (SKIHDASLLP…AKSHKGLRCA (81 aa)) lie on the Extracellular side of the membrane.

This sequence belongs to the insect chemoreceptor superfamily. Gustatory receptor (GR) family. Gr5a subfamily. In terms of tissue distribution, expressed in sweet sensing neurons of classical chemosensory sensilla, but also in two supersensitive neurons of atypical taste sensilla.

Its subcellular location is the cell membrane. One of the few identified sugar gustatory receptors identified so far with glucose being its primary ligand and which mediates acceptance behavior. The protein is Gustatory receptor for sugar taste 61a (Gr61a) of Drosophila melanogaster (Fruit fly).